A 913-amino-acid polypeptide reads, in one-letter code: Tyrosine-protein phosphatase non-receptor type 3 (913 aa).

The FERM domain maps to 29-312 (VICSIRFLDG…EHHSFFQAKK (284 aa)). Residues S357, S359, and S367 each carry the phosphoserine modification. Disordered stretches follow at residues 364–400 (ETKS…DNLA) and 417–473 (KGPL…PDGV). T376 carries the post-translational modification Phosphothreonine. S381 bears the Phosphoserine mark. Positions 382 to 393 (PRLRHEIRKPRH) are enriched in basic residues. S425 bears the Phosphoserine mark. Residues 441 to 453 (SENNPAQSCLTQK) are compositionally biased toward polar residues. Residues 454-470 (SSSSVSPSSNAPGSCSP) show a composition bias toward low complexity. The region spanning 510–582 (LIRITPDEEG…DQVVMFIKAS (73 aa)) is the PDZ domain. The 256-residue stretch at 646–901 (VLIQFEQLYR…KFVCEAILRV (256 aa)) folds into the Tyrosine-protein phosphatase domain. Residues D811, 842–848 (CSAGIGR), and Q886 each bind substrate. Residue C842 is the Phosphocysteine intermediate of the active site.

This sequence belongs to the protein-tyrosine phosphatase family. Non-receptor class subfamily.

Its subcellular location is the cell membrane. It is found in the cytoplasm. The protein resides in the cytoskeleton. It carries out the reaction O-phospho-L-tyrosyl-[protein] + H2O = L-tyrosyl-[protein] + phosphate. May act at junctions between the membrane and the cytoskeleton. This Mus musculus (Mouse) protein is Tyrosine-protein phosphatase non-receptor type 3 (Ptpn3).